The primary structure comprises 357 residues: DNA replication and repair protein RecF (357 aa).

30 to 37 (GANGSGKT) provides a ligand contact to ATP.

Belongs to the RecF family.

The protein localises to the cytoplasm. Functionally, the RecF protein is involved in DNA metabolism; it is required for DNA replication and normal SOS inducibility. RecF binds preferentially to single-stranded, linear DNA. It also seems to bind ATP. This chain is DNA replication and repair protein RecF, found in Salmonella arizonae (strain ATCC BAA-731 / CDC346-86 / RSK2980).